A 272-amino-acid polypeptide reads, in one-letter code: 5'-nucleotidase SurE (272 aa).

Aspartate 8, aspartate 9, serine 39, and asparagine 96 together coordinate a divalent metal cation.

It belongs to the SurE nucleotidase family. Requires a divalent metal cation as cofactor.

It localises to the cytoplasm. The enzyme catalyses a ribonucleoside 5'-phosphate + H2O = a ribonucleoside + phosphate. Nucleotidase that shows phosphatase activity on nucleoside 5'-monophosphates. The polypeptide is 5'-nucleotidase SurE (Heliobacterium modesticaldum (strain ATCC 51547 / Ice1)).